We begin with the raw amino-acid sequence, 354 residues long: Inactive ADP-ribosyltransferase ARH2 (354 aa).

Serine 27 carries the post-translational modification Phosphoserine.

It belongs to the ADP-ribosylglycohydrolase family.

It localises to the cytoplasm. It is found in the myofibril. The protein localises to the sarcomere. Functionally, required for myofibril assembly and outgrowth of the cardiac chambers in the developing heart. Appears to be catalytically inactive, showing no activity against O-acetyl-ADP-ribose. The sequence is that of Inactive ADP-ribosyltransferase ARH2 (ADPRHL1) from Bos taurus (Bovine).